A 110-amino-acid polypeptide reads, in one-letter code: Dermcidin (110 aa).

The signal sequence occupies residues 1-19; it reads MRFMTLLFLTALAGALVCA. The segment at 24 to 70 is disordered; that stretch reads AASAPGSGNPCHEASAAQKENAGEDPGLARQAPKPRKQRSSLLEKGL. Residues Ser-30 and Ser-38 are each glycosylated (O-linked (Xyl...) (chondroitin sulfate) serine). A propeptide spanning residues 50 to 62 is cleaved from the precursor; it reads GLARQAPKPRKQR. A helical transmembrane segment spans residues 64-108; it reads SLLEKGLDGAKKAVGGLGKLGKDAVEDLESVGKGAVHDVKDVLDS. Zn(2+) is bound at residue Glu-67. Lys-68 carries the N6-acetyllysine modification. Zn(2+)-binding residues include Asp-71, Asp-86, Asp-90, His-100, and Asp-104. A propeptide is located at residue Leu-110.

As to quaternary structure, homohexamer. The cofactor is Mn(2+). It depends on Zn(2+) as a cofactor. In terms of tissue distribution, detected in urine (at protein level). Constitutively expressed in eccrine sweat gland cells (at protein level). Secreted into the sweat at a concentration of 1-10 micrograms/ml.

The protein localises to the secreted. It localises to the membrane. Its function is as follows. Found in sweat, has an antimicrobial activity during early bacterial colonization. The secreted peptide assembles into homohexameric complexes that can associate with and also insert into pathogen membranes. Once inserted in bacteria membranes forms anion channels probably altering the transmembrane potential essential for bacterial survival. Highly effective against E.coli, E.faecalis, S.aureus and C.albicans. Optimal pH and salt concentration resemble the conditions in sweat. Also exhibits proteolytic activity, cleaving on the C-terminal side of Arg and, to a lesser extent, Lys residues. Functionally, promotes survival of neurons and displays phosphatase activity. It may bind IgG. This Homo sapiens (Human) protein is Dermcidin.